The following is an 861-amino-acid chain: DNA mismatch repair protein MutS (861 aa).

Position 618 to 625 (618 to 625 (GPNMGGKS)) interacts with ATP.

It belongs to the DNA mismatch repair MutS family.

Functionally, this protein is involved in the repair of mismatches in DNA. It is possible that it carries out the mismatch recognition step. This protein has a weak ATPase activity. This Shewanella frigidimarina (strain NCIMB 400) protein is DNA mismatch repair protein MutS.